The chain runs to 192 residues: Phosphoheptose isomerase (192 aa).

Residues 35–192 form the SIS domain; that stretch reads LIETLENQGK…CIERHFAHKN (158 aa). Residue 50 to 52 coordinates substrate; sequence NGG. Zn(2+)-binding residues include His-59 and Glu-63. Residues Glu-63, 92–93, 118–120, Ser-123, and Gln-170 contribute to the substrate site; these read ND and STS. Zn(2+) is bound by residues Gln-170 and His-178.

Belongs to the SIS family. GmhA subfamily. Homotetramer. Requires Zn(2+) as cofactor.

Its subcellular location is the cytoplasm. The catalysed reaction is 2 D-sedoheptulose 7-phosphate = D-glycero-alpha-D-manno-heptose 7-phosphate + D-glycero-beta-D-manno-heptose 7-phosphate. It participates in carbohydrate biosynthesis; D-glycero-D-manno-heptose 7-phosphate biosynthesis; D-glycero-alpha-D-manno-heptose 7-phosphate and D-glycero-beta-D-manno-heptose 7-phosphate from sedoheptulose 7-phosphate: step 1/1. Functionally, catalyzes the isomerization of sedoheptulose 7-phosphate in D-glycero-D-manno-heptose 7-phosphate. The chain is Phosphoheptose isomerase from Helicobacter pylori (strain HPAG1).